The following is a 151-amino-acid chain: MDPSKLAKLQAGARIGGKGTPRRKVKKPSKSAMSAADDKKVQGALKKLNMQNLAGIQEVNMFKEDGGVINFRAPTVHSSLPNETTAIYGKAEEKTLSEILPGILNNLGPESLTALRQMAEQLKVSEGEKGADAQADDGEIPDLVEKFDEQD.

2 disordered regions span residues 1–38 (MDPS…AADD) and 123–151 (KVSE…DEQD). Over residues 20–29 (TPRRKVKKPS) the composition is skewed to basic residues. An NAC-A/B domain is found at 35–100 (AADDKKVQGA…AEEKTLSEIL (66 aa)).

It belongs to the NAC-beta family. As to quaternary structure, part of the nascent polypeptide-associated complex (NAC), consisting of ucp15 and btf3. NAC associates with ribosomes via btf3.

The protein resides in the cytoplasm. Its subcellular location is the nucleus. Its function is as follows. Component of the nascent polypeptide-associated complex (NAC), a dynamic component of the ribosomal exit tunnel, protecting the emerging polypeptides from interaction with other cytoplasmic proteins to ensure appropriate nascent protein targeting. The NAC complex also promotes mitochondrial protein import by enhancing productive ribosome interactions with the outer mitochondrial membrane and blocks the inappropriate interaction of ribosomes translating non-secretory nascent polypeptides with translocation sites in the membrane of the endoplasmic reticulum. EGD1 may act as a transcription factor that exert a negative effect on the expression of several genes that are transcribed by RNA polymerase II. The protein is Nascent polypeptide-associated complex subunit beta (btf3) of Schizosaccharomyces pombe (strain 972 / ATCC 24843) (Fission yeast).